A 493-amino-acid polypeptide reads, in one-letter code: Glutamate--tRNA ligase (493 aa).

Residues 10-20 carry the 'HIGH' region motif; that stretch reads PSPTGDPHVGT. Positions 107, 109, 134, and 136 each coordinate Zn(2+). The 'KMSKS' region motif lies at 251-255; sequence KLSKR. ATP is bound at residue Lys-254.

This sequence belongs to the class-I aminoacyl-tRNA synthetase family. Glutamate--tRNA ligase type 1 subfamily. In terms of assembly, monomer. Zn(2+) is required as a cofactor.

It is found in the cytoplasm. The enzyme catalyses tRNA(Glu) + L-glutamate + ATP = L-glutamyl-tRNA(Glu) + AMP + diphosphate. Its function is as follows. Catalyzes the attachment of glutamate to tRNA(Glu) in a two-step reaction: glutamate is first activated by ATP to form Glu-AMP and then transferred to the acceptor end of tRNA(Glu). This is Glutamate--tRNA ligase from Stutzerimonas stutzeri (strain A1501) (Pseudomonas stutzeri).